A 211-amino-acid chain; its full sequence is Transcriptional regulatory protein LiaR (211 aa).

One can recognise a Response regulatory domain in the interval 3–119 (RVLLIDDHEM…EIADAIRAAS (117 aa)). Residue aspartate 54 is modified to 4-aspartylphosphate. The 66-residue stretch at 143-208 (NALPHESLTK…QAAVYAHRNH (66 aa)) folds into the HTH luxR-type domain. Positions 167 to 186 (NKEIGEELFITIKTVKTHIT) form a DNA-binding region, H-T-H motif.

Post-translationally, phosphorylated by LiaS.

It localises to the cytoplasm. Functionally, member of the two-component regulatory system LiaS/LiaR probably involved in response to a subset of cell wall-active antibiotics that interfere with the lipid II cycle in the cytoplasmic membrane (bacitracin, nisin, ramoplanin and vancomycin). Also seems to be involved in response to cationic antimicrobial peptides and secretion stress. LiaR regulates the transcription of the liaIHGFSR operon. The protein is Transcriptional regulatory protein LiaR (liaR) of Bacillus subtilis (strain 168).